The sequence spans 462 residues: Glutamate--tRNA ligase (462 aa).

The 'HIGH' region signature appears at 11-21 (PSPTGFIHLGN). The span at 120–131 (KPRYDGTWRPEP) shows a compositional bias: basic and acidic residues. The disordered stretch occupies residues 120 to 140 (KPRYDGTWRPEPGKTLPPIPA). The 'KMSKS' region motif lies at 243 to 247 (KMSKR). ATP is bound at residue Lys-246.

It belongs to the class-I aminoacyl-tRNA synthetase family. Glutamate--tRNA ligase type 1 subfamily. As to quaternary structure, monomer.

It is found in the cytoplasm. It carries out the reaction tRNA(Glu) + L-glutamate + ATP = L-glutamyl-tRNA(Glu) + AMP + diphosphate. Its function is as follows. Catalyzes the attachment of glutamate to tRNA(Glu) in a two-step reaction: glutamate is first activated by ATP to form Glu-AMP and then transferred to the acceptor end of tRNA(Glu). The chain is Glutamate--tRNA ligase from Polaromonas sp. (strain JS666 / ATCC BAA-500).